The chain runs to 578 residues: Vesicular acetylcholine transporter (578 aa).

The Cytoplasmic segment spans residues 1–32 (MASFQIPVINLEVREVKDIVWEKIQEPVNQRR). The chain crosses the membrane as a helical span at residues 33–53 (LILVIVSIALLLDNMLYMVIV). The Lumenal, vesicle portion of the chain corresponds to 54 to 98 (PIIPDYLREIGSFDDGPTPPPLRDNITGKIIPVHHDHHGQDSATG). Asparagine 78 is a glycosylation site (N-linked (GlcNAc...) asparagine). Residues 99–119 (ILFASKAIVQLMVNPFSGGLI) form a helical membrane-spanning segment. Residues 120-125 (DKIGYD) lie on the Cytoplasmic side of the membrane. Residues 126-146 (LPMMIGLTIMFFSTAVFACGS) traverse the membrane as a helical segment. Over 147–154 (SYSVLFFA) the chain is Lumenal, vesicle. A helical transmembrane segment spans residues 155–175 (RSLQGAGSAFADTAGLAMIAD). Over 176-187 (RFTEENERSQAL) the chain is Cytoplasmic. A helical membrane pass occupies residues 188–208 (GIALAFISFGCLVAPPFGGAL). Residues 209–215 (YQFAGKE) are Lumenal, vesicle-facing. A helical membrane pass occupies residues 216 to 236 (VPFLILALVCLLDGLMLLLVM). The Cytoplasmic portion of the chain corresponds to 237-263 (KPVKEAMKQSKDVQDQVIPIWRLLMDP). The chain crosses the membrane as a helical span at residues 264 to 284 (YIAVCAGALTMSNVALAFLEP). The Lumenal, vesicle segment spans residues 285-299 (TISLWMEDNMTTDNW). N-linked (GlcNAc...) asparagine glycosylation occurs at asparagine 293. A helical transmembrane segment spans residues 300-320 (KIGMVWLPAFFPHVLGVVITV). The Cytoplasmic segment spans residues 321 to 330 (KMARKYPQHQ). Residues 331–351 (WLMAAGGLALEGFSCFIIPFC) traverse the membrane as a helical segment. The Lumenal, vesicle segment spans residues 352–355 (SGYK). Residues 356 to 376 (MLMLPICVICFGIALIDTALL) form a helical membrane-spanning segment. At 377–387 (PTLGYLVDVRY) the chain is on the cytoplasmic side. The helical transmembrane segment at 388 to 408 (VSVYGSIYAIADISYSIAYAV) threads the bilayer. Over 409–413 (GPIIA) the chain is Lumenal, vesicle. Residues 414 to 434 (GGVVEAIGFTALNFLIAFSNL) form a helical membrane-spanning segment. The Cytoplasmic segment spans residues 435–578 (AYVPVLRKLR…APANPFRQGF (144 aa)). Composition is skewed to low complexity over residues 507–534 (EYQQ…EQGG) and 549–563 (QQQQ…QQVQ). The disordered stretch occupies residues 507 to 578 (EYQQQQQGYQ…APANPFRQGF (72 aa)).

The protein belongs to the major facilitator superfamily. Vesicular transporter family.

It is found in the membrane. Functionally, involved in acetylcholine transport into synaptic vesicles. The polypeptide is Vesicular acetylcholine transporter (VAChT) (Drosophila melanogaster (Fruit fly)).